The primary structure comprises 779 residues: Lon protease (779 aa).

The 194-residue stretch at 10-203 (LPLLPLRGLL…ILLTILNNER (194 aa)) folds into the Lon N-terminal domain. ATP is bound at residue 355 to 362 (GPPGVGKT). One can recognise a Lon proteolytic domain in the interval 591–772 (KDQVGSVTGL…DEVLRHALTK (182 aa)). Catalysis depends on residues S678 and K721.

Belongs to the peptidase S16 family. As to quaternary structure, homohexamer. Organized in a ring with a central cavity.

The protein localises to the cytoplasm. The catalysed reaction is Hydrolysis of proteins in presence of ATP.. ATP-dependent serine protease that mediates the selective degradation of mutant and abnormal proteins as well as certain short-lived regulatory proteins. Required for cellular homeostasis and for survival from DNA damage and developmental changes induced by stress. Degrades polypeptides processively to yield small peptide fragments that are 5 to 10 amino acids long. Binds to DNA in a double-stranded, site-specific manner. The sequence is that of Lon protease from Brevibacillus choshinensis.